The following is a 590-amino-acid chain: Proline--tRNA ligase (590 aa).

This sequence belongs to the class-II aminoacyl-tRNA synthetase family. ProS type 1 subfamily. In terms of assembly, homodimer.

Its subcellular location is the cytoplasm. It catalyses the reaction tRNA(Pro) + L-proline + ATP = L-prolyl-tRNA(Pro) + AMP + diphosphate. Its function is as follows. Catalyzes the attachment of proline to tRNA(Pro) in a two-step reaction: proline is first activated by ATP to form Pro-AMP and then transferred to the acceptor end of tRNA(Pro). As ProRS can inadvertently accommodate and process non-cognate amino acids such as alanine and cysteine, to avoid such errors it has two additional distinct editing activities against alanine. One activity is designated as 'pretransfer' editing and involves the tRNA(Pro)-independent hydrolysis of activated Ala-AMP. The other activity is designated 'posttransfer' editing and involves deacylation of mischarged Ala-tRNA(Pro). The misacylated Cys-tRNA(Pro) is not edited by ProRS. The sequence is that of Proline--tRNA ligase from Leifsonia xyli subsp. xyli (strain CTCB07).